The sequence spans 348 residues: NADH-quinone oxidoreductase subunit H 1 (348 aa).

8 helical membrane-spanning segments follow: residues Ile11 to Val31, Phe83 to Ile103, Val136 to Gly156, Ser172 to Leu192, Gly208 to Ala228, Met268 to Phe288, Leu289 to Ile309, and Leu324 to Val344.

It belongs to the complex I subunit 1 family. As to quaternary structure, NDH-1 is composed of 14 different subunits. Subunits NuoA, H, J, K, L, M, N constitute the membrane sector of the complex.

The protein resides in the cell inner membrane. The enzyme catalyses a quinone + NADH + 5 H(+)(in) = a quinol + NAD(+) + 4 H(+)(out). NDH-1 shuttles electrons from NADH, via FMN and iron-sulfur (Fe-S) centers, to quinones in the respiratory chain. The immediate electron acceptor for the enzyme in this species is believed to be ubiquinone. Couples the redox reaction to proton translocation (for every two electrons transferred, four hydrogen ions are translocated across the cytoplasmic membrane), and thus conserves the redox energy in a proton gradient. This subunit may bind ubiquinone. The protein is NADH-quinone oxidoreductase subunit H 1 of Geobacter sulfurreducens (strain ATCC 51573 / DSM 12127 / PCA).